The sequence spans 114 residues: MKLVRFLMKLNNETVSIELKNGTVVHGTITGVDVSMNTHLKTVKMSLKGKNPVTLDHLSLRGNNIRYYILPDSLNLETLLVEDTPRVKPKKPVAGKAVGRGRGRGRGRGRGRGR.

Positions 2–74 (KLVRFLMKLN…IRYYILPDSL (73 aa)) constitute a Sm domain. The disordered stretch occupies residues 87 to 114 (VKPKKPVAGKAVGRGRGRGRGRGRGRGR). Repeat copies occupy residues 99-100 (GR), 101-102 (GR), 103-104 (GR), 105-106 (GR), 107-108 (GR), 109-110 (GR), 111-112 (GR), and 113-114 (GR). An 8 X 2 AA tandem repeats of G-R region spans residues 99–114 (GRGRGRGRGRGRGRGR).

The protein belongs to the snRNP core protein family.

The protein resides in the nucleus. Its subcellular location is the nucleus speckle. It is found in the nucleolus. Involved in splicing regulation. Facilitates post-transcriptional gene silencing (PTGS) by limiting the degradation of transgene aberrant RNAs by the RNA quality control (RQC) machinery, thus favoring their entry into cytoplasmic siRNA bodies where they can trigger PTGS. Does not participate in the production of small RNAs. The polypeptide is Small nuclear ribonucleoprotein SmD1a (Arabidopsis thaliana (Mouse-ear cress)).